We begin with the raw amino-acid sequence, 198 residues long: Ribosome maturation factor RimP (198 aa).

This sequence belongs to the RimP family.

The protein resides in the cytoplasm. Required for maturation of 30S ribosomal subunits. The sequence is that of Ribosome maturation factor RimP from Rhizobium etli (strain ATCC 51251 / DSM 11541 / JCM 21823 / NBRC 15573 / CFN 42).